We begin with the raw amino-acid sequence, 358 residues long: Ganglioside-induced differentiation-associated protein 1 (358 aa).

In terms of domain architecture, GST N-terminal spans 24 to 105 (VKLILYHWTH…YLEQTFLDEK (82 aa)). Residues Lys-50, Lys-172, Lys-173, Lys-188, and Lys-190 each participate in a glycyl lysine isopeptide (Lys-Gly) (interchain with G-Cter in ubiquitin) cross-link. The GST C-terminal domain occupies 153-309 (PAYATTRIRS…LISAVLPTAF (157 aa)). Lys-203 bears the N6-acetyllysine; alternate mark. Residue Lys-203 forms a Glycyl lysine isopeptide (Lys-Gly) (interchain with G-Cter in ubiquitin); alternate linkage. Residues Lys-206, Lys-207, and Lys-214 each participate in a glycyl lysine isopeptide (Lys-Gly) (interchain with G-Cter in ubiquitin) cross-link. Helical transmembrane passes span 292-312 (VLGH…FRVA) and 320-340 (LGTT…FMLF). The interval 320–358 (LGTTLVVGLLAGMGYFAFMLFRKRLGSMILALRPRPNYF) is required for mitochondrial localization.

It belongs to the GST superfamily. Homodimer. In terms of processing, ubiquitinated by PRKN during mitophagy, leading to its degradation and enhancement of mitophagy. Deubiquitinated by USP30.

The protein resides in the mitochondrion outer membrane. It is found in the cytoplasm. Its function is as follows. Regulates the mitochondrial network by promoting mitochondrial fission. In Bos taurus (Bovine), this protein is Ganglioside-induced differentiation-associated protein 1 (GDAP1).